A 358-amino-acid polypeptide reads, in one-letter code: uncharacterized protein (358 aa).

It belongs to the serpin family. Poxviruses subfamily.

This is an uncharacterized protein from Fowlpox virus (strain NVSL) (FPV).